Here is a 450-residue protein sequence, read N- to C-terminus: Probable glycine dehydrogenase (decarboxylating) subunit 1 (450 aa).

It belongs to the GcvP family. N-terminal subunit subfamily. In terms of assembly, the glycine cleavage system is composed of four proteins: P, T, L and H. In this organism, the P 'protein' is a heterodimer of two subunits.

It carries out the reaction N(6)-[(R)-lipoyl]-L-lysyl-[glycine-cleavage complex H protein] + glycine + H(+) = N(6)-[(R)-S(8)-aminomethyldihydrolipoyl]-L-lysyl-[glycine-cleavage complex H protein] + CO2. Its function is as follows. The glycine cleavage system catalyzes the degradation of glycine. The P protein binds the alpha-amino group of glycine through its pyridoxal phosphate cofactor; CO(2) is released and the remaining methylamine moiety is then transferred to the lipoamide cofactor of the H protein. The sequence is that of Probable glycine dehydrogenase (decarboxylating) subunit 1 from Brevibacillus brevis (strain 47 / JCM 6285 / NBRC 100599).